A 355-amino-acid polypeptide reads, in one-letter code: 3-dehydroquinate synthase (355 aa).

Residues 71–76, 105–109, 129–130, lysine 142, and lysine 151 each bind NAD(+); these read EGEERK, GVVGD, and TS. Zn(2+) is bound by residues glutamate 184, histidine 246, and histidine 263.

Belongs to the sugar phosphate cyclases superfamily. Dehydroquinate synthase family. Co(2+) is required as a cofactor. Zn(2+) serves as cofactor. The cofactor is NAD(+).

It localises to the cytoplasm. The catalysed reaction is 7-phospho-2-dehydro-3-deoxy-D-arabino-heptonate = 3-dehydroquinate + phosphate. It functions in the pathway metabolic intermediate biosynthesis; chorismate biosynthesis; chorismate from D-erythrose 4-phosphate and phosphoenolpyruvate: step 2/7. Functionally, catalyzes the conversion of 3-deoxy-D-arabino-heptulosonate 7-phosphate (DAHP) to dehydroquinate (DHQ). This is 3-dehydroquinate synthase from Streptococcus pneumoniae (strain 70585).